Reading from the N-terminus, the 387-residue chain is Alpha-2B adrenergic receptor (387 aa).

Residues 1-25 traverse the membrane as a helical segment; the sequence is AIAAVITFLILFTIFGNALVILAVL. Over 26–36 the chain is Cytoplasmic; that stretch reads TSRSLRAPQNL. Residues 37–62 form a helical membrane-spanning segment; sequence FLVSLAAADILVATLIIPFSLANELL. Over 63-72 the chain is Extracellular; the sequence is GYWYFRHTWC. Residues Cys72 and Cys151 are joined by a disulfide bond. Residues 73–95 traverse the membrane as a helical segment; that stretch reads XVYLALDVLFCTSSIVHLCAISL. Topologically, residues 96 to 117 are cytoplasmic; it reads DRYWAVSRALEYNSKRTPRRIK. Residues 118–140 traverse the membrane as a helical segment; it reads CIILTVWLIAAAISLPPLIYKGD. The Extracellular portion of the chain corresponds to 141–156; sequence QDPQPRGRPQCKLNQE. Residues 157–180 form a helical membrane-spanning segment; sequence AWYILSSSIGSFFVPCLIMILVYL. Over 181–351 the chain is Cytoplasmic; sequence RIYLIAKRSS…LTREKRFTFV (171 aa). Residues 193–303 form a disordered region; it reads RKPRAKGXPR…VPASPALACS (111 aa). Residues 279 to 290 are compositionally biased toward acidic residues; sequence PEEEAEEEEECG. The chain crosses the membrane as a helical span at residues 352-375; the sequence is LAVVIGVFVLCWFPFFFSYSLGAI. Residues 376 to 384 lie on the Extracellular side of the membrane; sequence CPQHCKVPH. A helical membrane pass occupies residues 385–387; it reads GLF.

It belongs to the G-protein coupled receptor 1 family. Adrenergic receptor subfamily. ADRA2B sub-subfamily. As to quaternary structure, interacts with RAB26. Interacts with PPP1R9B. Interacts with GGA1, GGA2 and GGA3.

It localises to the cell membrane. Alpha-2 adrenergic receptors mediate the catecholamine-induced inhibition of adenylate cyclase through the action of G proteins. The polypeptide is Alpha-2B adrenergic receptor (ADRA2B) (Macroscelides proboscideus (Short-eared elephant shrew)).